Here is a 471-residue protein sequence, read N- to C-terminus: Proton-coupled amino acid transporter-like protein pathetic (471 aa).

Asn-61 is a glycosylation site (N-linked (GlcNAc...) asparagine). Transmembrane regions (helical) follow at residues 81 to 101 (FAFM…TAFI), 153 to 173 (ILFG…VIVA), 187 to 207 (AVSL…IAWV), 216 to 236 (VSMV…YYLV), 253 to 273 (LPQF…VMPL), 283 to 303 (FLGI…IYML), 337 to 357 (LISL…LEII), 375 to 395 (VLRT…PTIG), 397 to 417 (FMGL…PVVI), and 432 to 452 (WILW…VFGT).

The protein belongs to the amino acid/polyamine transporter 2 family. In terms of tissue distribution, in third instar larvae, expressed at highest levels in the brain and digestive system with particularly high levels in surface glia of the brain (at protein level). In third instar larvae, expressed in all cells of the body wall (at protein level). Within the body wall of third instar larvae, most highly expressed in epithelial cells and sensory neurons. Expressed at a similar level in all da neurons (at protein level). Widely expressed during embryonic and late larval stages. Levels are highly dynamic in embryogenesis with surges of expression in many structures, including muscle primordia, salivary glands, proventriculus, trachea and gonads. Expressed in all or most cells of larval imaginal disks. Expression is also particularly strong in the pouch and hinge regions of the wing disk and in the morphogenetic furrow of the eye disk.

It is found in the cell membrane. The protein localises to the lysosome membrane. It localises to the late endosome membrane. The protein resides in the cell projection. Its subcellular location is the axon. It is found in the dendrite. The protein localises to the perikaryon. It localises to the cytoplasm. Its function is as follows. Amino acid transporter which has pH-dependent electrogenic transport activity for alanine and glycine but not for proline. Plays a role in positive regulation of growth by directly or indirectly modulating the effects of the TOR signaling pathway. Required in a cell-autonomous manner for dendrite growth in neurons with large dendrite arbors. In Drosophila melanogaster (Fruit fly), this protein is Proton-coupled amino acid transporter-like protein pathetic.